A 1230-amino-acid chain; its full sequence is Serine/threonine-protein kinase CST20 (1230 aa).

Residues methionine 1–serine 20 show a composition bias toward polar residues. Disordered regions lie at residues methionine 1–asparagine 384 and serine 413–glutamate 470. Composition is skewed to low complexity over residues asparagine 57–serine 70 and serine 96–serine 125. Basic and acidic residues predominate over residues histidine 150 to tyrosine 161. Composition is skewed to polar residues over residues aspartate 175–serine 197, threonine 207–alanine 224, and proline 237–aspartate 246. Low complexity predominate over residues serine 248 to valine 257. 2 stretches are compositionally biased toward polar residues: residues serine 262–serine 277 and aspartate 311–glycine 330. Composition is skewed to low complexity over residues asparagine 349–threonine 381 and lysine 439–serine 468. The region spanning isoleucine 475–glycine 488 is the CRIB domain. 2 disordered regions span residues phenylalanine 545 to aspartate 831 and leucine 867 to alanine 919. Positions asparagine 550–asparagine 561 are enriched in polar residues. A compositionally biased stretch (gly residues) spans serine 570–alanine 581. Polar residues predominate over residues isoleucine 604 to lysine 613. Residues threonine 614–asparagine 628 show a composition bias toward basic and acidic residues. Residues alanine 629–glutamine 642 show a composition bias toward polar residues. 3 stretches are compositionally biased toward low complexity: residues proline 670–aspartate 683, serine 696–leucine 710, and serine 736–serine 749. Over residues glutamine 750–alanine 761 the composition is skewed to polar residues. Positions alanine 789–proline 807 are enriched in pro residues. Polar residues predominate over residues leucine 811–serine 826. A compositionally biased stretch (basic and acidic residues) spans leucine 867 to arginine 876. Polar residues predominate over residues glutamine 877–serine 892. In terms of domain architecture, Protein kinase spans tyrosine 953–isoleucine 1205. Residues isoleucine 959 to valine 967 and lysine 983 each bind ATP. The active-site Proton acceptor is the aspartate 1073.

Belongs to the protein kinase superfamily. STE Ser/Thr protein kinase family. STE20 subfamily.

Its subcellular location is the cytoplasm. It is found in the nucleus. The enzyme catalyses L-seryl-[protein] + ATP = O-phospho-L-seryl-[protein] + ADP + H(+). The catalysed reaction is L-threonyl-[protein] + ATP = O-phospho-L-threonyl-[protein] + ADP + H(+). Its function is as follows. MAP4K component of the MAPK pathway required for the mating pheromone response, and the regulation of cell polarity and cell cycle. Phosphorylates histone H2B to form H2BS10ph. Required for hyphal formation and virulence. In Candida albicans (Yeast), this protein is Serine/threonine-protein kinase CST20 (CST20).